We begin with the raw amino-acid sequence, 127 residues long: Aspartate 1-decarboxylase (127 aa).

The Schiff-base intermediate with substrate; via pyruvic acid role is filled by serine 25. The residue at position 25 (serine 25) is a Pyruvic acid (Ser). Threonine 57 contacts substrate. Residue tyrosine 58 is the Proton donor of the active site. 73-75 (GAA) is a binding site for substrate.

The protein belongs to the PanD family. As to quaternary structure, heterooctamer of four alpha and four beta subunits. Pyruvate is required as a cofactor. In terms of processing, is synthesized initially as an inactive proenzyme, which is activated by self-cleavage at a specific serine bond to produce a beta-subunit with a hydroxyl group at its C-terminus and an alpha-subunit with a pyruvoyl group at its N-terminus.

The protein resides in the cytoplasm. It catalyses the reaction L-aspartate + H(+) = beta-alanine + CO2. It functions in the pathway cofactor biosynthesis; (R)-pantothenate biosynthesis; beta-alanine from L-aspartate: step 1/1. In terms of biological role, catalyzes the pyruvoyl-dependent decarboxylation of aspartate to produce beta-alanine. The polypeptide is Aspartate 1-decarboxylase (Neisseria meningitidis serogroup A / serotype 4A (strain DSM 15465 / Z2491)).